The following is a 162-amino-acid chain: Phycoerythrocyanin alpha chain (162 aa).

Cysteine 84 contacts (15Z)-phycoviolobilin.

It belongs to the phycobiliprotein family. As to quaternary structure, heterodimer of an alpha and a beta chain. Post-translationally, contains one covalently linked bilin chromophore.

It is found in the cellular thylakoid membrane. Light-harvesting photosynthetic bile pigment-protein from the phycobiliprotein complex. In Nostoc sp. (strain PCC 7120 / SAG 25.82 / UTEX 2576), this protein is Phycoerythrocyanin alpha chain (pecA).